The primary structure comprises 189 residues: dTTP/UTP pyrophosphatase (189 aa).

Asp70 acts as the Proton acceptor in catalysis. Cys74 and Cys79 are joined by a disulfide.

Belongs to the Maf family. YhdE subfamily. In terms of assembly, homodimer. The cofactor is a divalent metal cation.

It localises to the cytoplasm. It carries out the reaction dTTP + H2O = dTMP + diphosphate + H(+). The catalysed reaction is UTP + H2O = UMP + diphosphate + H(+). It catalyses the reaction CTP + H2O = CMP + diphosphate + H(+). The enzyme catalyses psi-UTP + H2O = psi-UMP + diphosphate + H(+). It carries out the reaction 5-methyl-CTP + H2O = 5-methyl-CMP + diphosphate + H(+). The catalysed reaction is 5-methyl-UTP + H2O = 5-methyl-UMP + diphosphate + H(+). Its function is as follows. Nucleoside triphosphate pyrophosphatase that hydrolyzes dTTP and UTP. Can also hydrolyze CTP and the modified nucleotides pseudo-UTP, 5-methyl-CTP (m(5)CTP) and 5-methyl-UTP (m(5)UTP). May have a dual role in cell division arrest and in preventing the incorporation of modified nucleotides into cellular nucleic acids. The protein is dTTP/UTP pyrophosphatase of Bacillus subtilis (strain 168).